The sequence spans 236 residues: Leucyl/phenylalanyl-tRNA--protein transferase (236 aa).

It belongs to the L/F-transferase family.

The protein localises to the cytoplasm. It catalyses the reaction N-terminal L-lysyl-[protein] + L-leucyl-tRNA(Leu) = N-terminal L-leucyl-L-lysyl-[protein] + tRNA(Leu) + H(+). The enzyme catalyses N-terminal L-arginyl-[protein] + L-leucyl-tRNA(Leu) = N-terminal L-leucyl-L-arginyl-[protein] + tRNA(Leu) + H(+). The catalysed reaction is L-phenylalanyl-tRNA(Phe) + an N-terminal L-alpha-aminoacyl-[protein] = an N-terminal L-phenylalanyl-L-alpha-aminoacyl-[protein] + tRNA(Phe). Its function is as follows. Functions in the N-end rule pathway of protein degradation where it conjugates Leu, Phe and, less efficiently, Met from aminoacyl-tRNAs to the N-termini of proteins containing an N-terminal arginine or lysine. This chain is Leucyl/phenylalanyl-tRNA--protein transferase, found in Nitrosomonas europaea (strain ATCC 19718 / CIP 103999 / KCTC 2705 / NBRC 14298).